The sequence spans 129 residues: MRPLKPGAPLPALFLLALALSPHGAHGRPRGRRGARVTDKEPKPLLFLPAAGAGRTPSGSRSAEIFPRDSNLKDKFIKHFTGPVTFSPECSKHFHRLYYNTRECSTPAYYKRCARLLTRLAVSPLCSQT.

A signal peptide spans 1 to 27 (MRPLKPGAPLPALFLLALALSPHGAHG). The disordered stretch occupies residues 24–63 (GAHGRPRGRRGARVTDKEPKPLLFLPAAGAGRTPSGSRSA). Residues 25-35 (AHGRPRGRRGA) are compositionally biased toward basic residues. Cystine bridges form between Cys-90/Cys-126 and Cys-104/Cys-113.

Belongs to the ALKAL family. Widely expressed with highest levels in thyroid and moderate levels in stomach, trachea, small intestine, prostate and brain.

The protein resides in the secreted. It localises to the cell membrane. Cytokine that acts as a physiological ligand for receptor tyrosine kinase LTK, leading to its activation. Monomeric ALKAL1 binds to LTK, leading to LTK homodimerization and activation. In contrast to ALKAL2, does not act as a potent physiological ligand for ALK. This Homo sapiens (Human) protein is ALK and LTK ligand 1.